The sequence spans 792 residues: MKFSENWLRSHVPIQATRDELAATLTAIGLEVEEVIPLGESLGQVVVARIVEAMRHPEADRLQVCSVDAGQGELLQIVCGAPNARPGLVAPLALVGAKIGELTITAAKLRGVASNGMLCSAKELGLDSDAAGLFELPDDAPVGQALAEYLGLPDASIEIKLTPNRADCFSVRGIAFDVAAACASEVVAFDAGAVAPVSTRTLAVELDAGKDAPRYCGRVIEGIDPAAKTPVWLAERLRRSGVRPVSLLVDITQYVMLELGQPMHAFDLDTLHGPIGVRRSCAGEQLALLDGRQVTLDDSFLTIADAGRPVALAGLMGGLDTRVTETTRNVFLESAYFDPAAIMGRGRKLGLHTDAGHRFERGVDSALPPQAIEVATRLVLELAGGTPGPVVHAQLPQHLPQPARILLRRARIARVLGIQIDDVDVVRMLRALGMQLDAVAEGWEVMAPSRRFDIAIEEDLIEDLARIHGYDRVPTTLPGGASRIAMPSETQLDELSVRRQLVARELQETINYAFVDAALLERWQLTNGLVPLANPLSAELAIMRPCLLPGLVATLGRNAARQAGRVRLFELGKVFAAAADAGAAPQESQHVAAAVCGDALALQWGEAARKVDFHDVKGDLMALAAASGAQLEFQPSTQPFGHPGRSADIYRDGVCIGWIGQVHPRLAKALDIDVDVIAFELQLGPLVQRTLPCAGELSRFPSVRRDLAFLVPDEVSWAAVSASVRTTVGPLLREVQLFDRYVGQGVAPGFKSLAMGLILQDNSRTLTDRDVDAVVTDVVAVIEREHRARIRS.

The region spanning 39-147 (GESLGQVVVA…DDAPVGQALA (109 aa)) is the tRNA-binding domain. One can recognise a B5 domain in the interval 400–475 (PQPARILLRR…RIHGYDRVPT (76 aa)). Residues D453, D459, E462, and D463 each contribute to the Mg(2+) site. One can recognise an FDX-ACB domain in the interval 698-791 (SRFPSVRRDL…IEREHRARIR (94 aa)).

The protein belongs to the phenylalanyl-tRNA synthetase beta subunit family. Type 1 subfamily. In terms of assembly, tetramer of two alpha and two beta subunits. Mg(2+) serves as cofactor.

It is found in the cytoplasm. The catalysed reaction is tRNA(Phe) + L-phenylalanine + ATP = L-phenylalanyl-tRNA(Phe) + AMP + diphosphate + H(+). This Xanthomonas oryzae pv. oryzae (strain MAFF 311018) protein is Phenylalanine--tRNA ligase beta subunit.